Here is a 403-residue protein sequence, read N- to C-terminus: 8-amino-7-oxononanoate synthase (403 aa).

Arginine 30 contacts substrate. Residue 121-122 (GY) coordinates pyridoxal 5'-phosphate. Residue histidine 146 coordinates substrate. Residues serine 192, histidine 220, and threonine 248 each coordinate pyridoxal 5'-phosphate. Position 251 is an N6-(pyridoxal phosphate)lysine (lysine 251). Threonine 367 provides a ligand contact to substrate.

The protein belongs to the class-II pyridoxal-phosphate-dependent aminotransferase family. BioF subfamily. Homodimer. The cofactor is pyridoxal 5'-phosphate.

The enzyme catalyses 6-carboxyhexanoyl-[ACP] + L-alanine + H(+) = (8S)-8-amino-7-oxononanoate + holo-[ACP] + CO2. The protein operates within cofactor biosynthesis; biotin biosynthesis. Its function is as follows. Catalyzes the decarboxylative condensation of pimeloyl-[acyl-carrier protein] and L-alanine to produce 8-amino-7-oxononanoate (AON), [acyl-carrier protein], and carbon dioxide. The chain is 8-amino-7-oxononanoate synthase from Burkholderia vietnamiensis (strain G4 / LMG 22486) (Burkholderia cepacia (strain R1808)).